A 423-amino-acid chain; its full sequence is Histone acetyltransferase type B subunit 2 (423 aa).

WD repeat units lie at residues 138 to 174 (PHIE…TLEE), 175 to 224 (SKAQ…KPKS), 228 to 268 (SHDD…EPVK), 271 to 311 (PTAS…SPLH), and 315 to 355 (GHQD…AEQS). Residues 357 to 361 (DDADD) are interaction with the histone H4 N-terminus. The stretch at 372 to 412 (GHRSPVNEFSFNPQIPWLLASTEEDNVIQAWKVSMKLVNAS) is one WD 6 repeat.

It belongs to the WD repeat RBAP46/RBAP48/MSI1 family. Component of the HAT-B complex composed of at least HAT1 and HAT2. The HAT-B complex binds to histone H4 tail.

The protein resides in the cytoplasm. The protein localises to the nucleus. In terms of biological role, regulatory subunit of the histone acetylase B (HAT-B) complex. The complex acetylates 'Lys-12' of histone H4 which is required for telomeric silencing. This Eremothecium gossypii (strain ATCC 10895 / CBS 109.51 / FGSC 9923 / NRRL Y-1056) (Yeast) protein is Histone acetyltransferase type B subunit 2 (HAT2).